A 340-amino-acid polypeptide reads, in one-letter code: MQSIPIKNVGTDNISQLIDRFERQYVYLRLSITDVCNFRCNYCLPDGYKPPSHKQQFLSVSEIQRVVRAFADLGTEKVRITGGEPTLRKDFLEIAHTVSQTNGIKKVALTTNGYRMERDIDLWQQAGITDINVSVDSLDTRQFQLITGENKLQSILKGIDRAFEIGYRKIKVNAVLMKQYTAPELDKFLVWIKDKPIQMRFIELMETGEMDSFFQAQHLSGQSVMQRLLQEGWQLQPKALSDGPAKVLSHPDYQGEIGLIMPYEKNFCASCNRLRVSALGKLHLCLFGEEGIDLRDLLSEDTQQAQLEARLKAALQGKREHHYLHIGDSGIRNNLASIGG.

The Radical SAM core domain occupies 20–246 (RFERQYVYLR…PKALSDGPAK (227 aa)). Arginine 29 contributes to the GTP binding site. 2 residues coordinate [4Fe-4S] cluster: cysteine 36 and cysteine 40. Tyrosine 42 provides a ligand contact to S-adenosyl-L-methionine. Cysteine 43 contacts [4Fe-4S] cluster. Arginine 79 lines the GTP pocket. Position 83 (glycine 83) interacts with S-adenosyl-L-methionine. Residue threonine 110 participates in GTP binding. Serine 134 is an S-adenosyl-L-methionine binding site. Lysine 171 lines the GTP pocket. Methionine 205 serves as a coordination point for S-adenosyl-L-methionine. 2 residues coordinate [4Fe-4S] cluster: cysteine 268 and cysteine 271. 273–275 (RLR) serves as a coordination point for GTP. Cysteine 285 contacts [4Fe-4S] cluster.

The protein belongs to the radical SAM superfamily. MoaA family. As to quaternary structure, monomer and homodimer. It depends on [4Fe-4S] cluster as a cofactor.

The catalysed reaction is GTP + AH2 + S-adenosyl-L-methionine = (8S)-3',8-cyclo-7,8-dihydroguanosine 5'-triphosphate + 5'-deoxyadenosine + L-methionine + A + H(+). It functions in the pathway cofactor biosynthesis; molybdopterin biosynthesis. Its function is as follows. Catalyzes the cyclization of GTP to (8S)-3',8-cyclo-7,8-dihydroguanosine 5'-triphosphate. The chain is GTP 3',8-cyclase from Actinobacillus pleuropneumoniae serotype 3 (strain JL03).